A 629-amino-acid chain; its full sequence is uncharacterized protein (629 aa).

His562 (proton acceptor) is an active-site residue.

It belongs to the GMC oxidoreductase family. FAD serves as cofactor.

This is an uncharacterized protein from Mycobacterium tuberculosis (strain CDC 1551 / Oshkosh).